A 190-amino-acid polypeptide reads, in one-letter code: HTH-type transcriptional repressor CutR (190 aa).

One can recognise an HTH deoR-type domain in the interval 3–58 (PINRQQHILKWLKEEGSLRISDISARFGVSEMTVYRDVNQLVQSNQVIKTAGGITL). The H-T-H motif DNA-binding region spans 20–39 (LRISDISARFGVSEMTVYRD).

The protein localises to the cytoplasm. Functionally, may act as a negative transcriptional regulator of cutJ/ycnJ in the presence of copper. May use copper as a corepressor. The sequence is that of HTH-type transcriptional repressor CutR from Bacillus subtilis (strain 168).